Reading from the N-terminus, the 317-residue chain is Dehydrogenase/reductase SDR family protein 7-like (317 aa).

Residues 1-10 (MKNLAERSAG) are Cytoplasmic-facing. A helical; Signal-anchor for type II membrane protein membrane pass occupies residues 11–31 (SLYWWLLATLFLPIAIPGLVL). Topologically, residues 32-317 (KLLTMMKEQR…KKRAEKLNST (286 aa)) are peroxisomal. 52–76 (LITGASSGLGEALAHSFFLAGCKVV) provides a ligand contact to NAD(+). Ser189 lines the substrate pocket. Tyr202 (proton acceptor) is an active-site residue.

This sequence belongs to the short-chain dehydrogenases/reductases (SDR) family.

It is found in the peroxisome membrane. In terms of biological role, putative oxidoreductase. In Anopheles gambiae (African malaria mosquito), this protein is Dehydrogenase/reductase SDR family protein 7-like.